Consider the following 184-residue polypeptide: Shikimate kinase (184 aa).

20–25 is a binding site for ATP; it reads GVGKSR. Ser-24 provides a ligand contact to Mg(2+). 3 residues coordinate substrate: Asp-42, Arg-66, and Gly-88. Arg-127 contributes to the ATP binding site. A substrate-binding site is contributed by Arg-146. Arg-162 is a binding site for ATP.

This sequence belongs to the shikimate kinase family. Monomer. Requires Mg(2+) as cofactor.

It is found in the cytoplasm. It catalyses the reaction shikimate + ATP = 3-phosphoshikimate + ADP + H(+). The protein operates within metabolic intermediate biosynthesis; chorismate biosynthesis; chorismate from D-erythrose 4-phosphate and phosphoenolpyruvate: step 5/7. Functionally, catalyzes the specific phosphorylation of the 3-hydroxyl group of shikimic acid using ATP as a cosubstrate. The protein is Shikimate kinase of Thermus thermophilus (strain ATCC BAA-163 / DSM 7039 / HB27).